The following is a 994-amino-acid chain: Phosphoenolpyruvate carboxylase (994 aa).

The interval 1 to 67 (MKAVRSDKTT…GRTREDKDHP (67 aa)) is disordered. Low complexity-rich tracts occupy residues 9 to 24 (TTQAATTAQAQKPAKA) and 34 to 57 (AAPQAANASARQPASAQAPAPKAN). Active-site residues include His-204 and Lys-646.

The protein belongs to the PEPCase type 1 family. Mg(2+) is required as a cofactor.

It catalyses the reaction oxaloacetate + phosphate = phosphoenolpyruvate + hydrogencarbonate. Its function is as follows. Forms oxaloacetate, a four-carbon dicarboxylic acid source for the tricarboxylic acid cycle. In Paraburkholderia xenovorans (strain LB400), this protein is Phosphoenolpyruvate carboxylase.